Consider the following 338-residue polypeptide: Ketol-acid reductoisomerase (NADP(+)) (338 aa).

Residues 1–181 enclose the KARI N-terminal Rossmann domain; sequence MKVFYDKDAD…GGGRAGIIET (181 aa). NADP(+) contacts are provided by residues 24–27, R47, and S52; that span reads YGSQ. H107 is a catalytic residue. G133 contacts NADP(+). The KARI C-terminal knotted domain occupies 182 to 327; it reads NFREETETDL…EKLRAMMPWI (146 aa). D190, E194, E226, and E230 together coordinate Mg(2+). S251 serves as a coordination point for substrate.

It belongs to the ketol-acid reductoisomerase family. It depends on Mg(2+) as a cofactor.

The enzyme catalyses (2R)-2,3-dihydroxy-3-methylbutanoate + NADP(+) = (2S)-2-acetolactate + NADPH + H(+). It carries out the reaction (2R,3R)-2,3-dihydroxy-3-methylpentanoate + NADP(+) = (S)-2-ethyl-2-hydroxy-3-oxobutanoate + NADPH + H(+). It functions in the pathway amino-acid biosynthesis; L-isoleucine biosynthesis; L-isoleucine from 2-oxobutanoate: step 2/4. The protein operates within amino-acid biosynthesis; L-valine biosynthesis; L-valine from pyruvate: step 2/4. In terms of biological role, involved in the biosynthesis of branched-chain amino acids (BCAA). Catalyzes an alkyl-migration followed by a ketol-acid reduction of (S)-2-acetolactate (S2AL) to yield (R)-2,3-dihydroxy-isovalerate. In the isomerase reaction, S2AL is rearranged via a Mg-dependent methyl migration to produce 3-hydroxy-3-methyl-2-ketobutyrate (HMKB). In the reductase reaction, this 2-ketoacid undergoes a metal-dependent reduction by NADPH to yield (R)-2,3-dihydroxy-isovalerate. The polypeptide is Ketol-acid reductoisomerase (NADP(+)) (Cupriavidus pinatubonensis (strain JMP 134 / LMG 1197) (Cupriavidus necator (strain JMP 134))).